The sequence spans 112 residues: Histone H3-4 (112 aa).

Positions 1–31 (QTGAKAPRKALANKAARKTAPADGGVKKPHR) are disordered.

The protein belongs to the histone H3 family. The nucleosome is a histone octamer containing two molecules each of H2A, H2B, H3 and H4 assembled in one H3-H4 heterotetramer and two H2A-H2B heterodimers. The octamer wraps approximately 147 bp of DNA.

The protein resides in the nucleus. The protein localises to the chromosome. Its function is as follows. Core component of nucleosome. Nucleosomes wrap and compact DNA into chromatin, limiting DNA accessibility to the cellular machineries which require DNA as a template. Histones thereby play a central role in transcription regulation, DNA repair, DNA replication and chromosomal stability. DNA accessibility is regulated via a complex set of post-translational modifications of histones, also called histone code, and nucleosome remodeling. The chain is Histone H3-4 (H3-4) from Stylonychia lemnae (Ciliate).